Reading from the N-terminus, the 274-residue chain is Large ribosomal subunit protein uL2 (274 aa).

A disordered region spans residues 220–259; that stretch reads VRGAAMNPRDHPHGGGEGRAPRGMSTPKTKWGKPARGVKT. The segment covering 227 to 239 has biased composition (basic and acidic residues); that stretch reads PRDHPHGGGEGRA. The span at 249–259 shows a compositional bias: basic residues; it reads KWGKPARGVKT.

It belongs to the universal ribosomal protein uL2 family. As to quaternary structure, part of the 50S ribosomal subunit. Forms a bridge to the 30S subunit in the 70S ribosome.

Its function is as follows. One of the primary rRNA binding proteins. Required for association of the 30S and 50S subunits to form the 70S ribosome, for tRNA binding and peptide bond formation. It has been suggested to have peptidyltransferase activity; this is somewhat controversial. Makes several contacts with the 16S rRNA in the 70S ribosome. The chain is Large ribosomal subunit protein uL2 from Chloroflexus aggregans (strain MD-66 / DSM 9485).